We begin with the raw amino-acid sequence, 149 residues long: Transcriptional repressor NrdR (149 aa).

A zinc finger spans residues Cys3–Cys34. The 91-residue stretch at Pro49 to Glu139 folds into the ATP-cone domain.

It belongs to the NrdR family. It depends on Zn(2+) as a cofactor.

Functionally, negatively regulates transcription of bacterial ribonucleotide reductase nrd genes and operons by binding to NrdR-boxes. This is Transcriptional repressor NrdR from Haemophilus ducreyi (strain 35000HP / ATCC 700724).